The following is a 234-amino-acid chain: Protein SSP120 (234 aa).

The first 22 residues, 1–22 (MRFLRGFVFSLAFTLYKVTATA), serve as a signal peptide directing secretion. EF-hand domains lie at 52–87 (LKDY…NREE) and 108–143 (MAKR…GNKF). Thr-212 carries the phosphothreonine modification.

The protein is Protein SSP120 (SSP120) of Saccharomyces cerevisiae (strain ATCC 204508 / S288c) (Baker's yeast).